The primary structure comprises 101 residues: Large ribosomal subunit protein eL43 (101 aa).

A C4-type zinc finger spans residues 40-62; it reads CPSCRSLVRLKRLAFGIWQCPKC.

The protein belongs to the eukaryotic ribosomal protein eL43 family. The cofactor is Zn(2+).

In Pyrobaculum islandicum (strain DSM 4184 / JCM 9189 / GEO3), this protein is Large ribosomal subunit protein eL43.